Here is a 382-residue protein sequence, read N- to C-terminus: Beta-1,4-galactosyltransferase 6 (382 aa).

The Cytoplasmic segment spans residues M1–L15. Residues I16 to A35 form a helical; Signal-anchor for type II membrane protein membrane-spanning segment. Residues P36–Y382 lie on the Lumenal side of the membrane. Residues N71, N75, N83, N84, N99, and N122 are each glycosylated (N-linked (GlcNAc...) asparagine). An intrachain disulfide couples C108 to C152. Residues P163–R167, F202–R204, V229–D230, Y258, and W290 contribute to the UDP-alpha-D-galactose site. C223 and C242 are disulfide-bonded. Residue D230 coordinates Mn(2+). G292–D295 contributes to the N-acetyl-D-glucosamine binding site. N307 is a glycosylation site (N-linked (GlcNAc...) asparagine). H323 contacts Mn(2+). H323–H324 contributes to the UDP-alpha-D-galactose binding site. R334 serves as a coordination point for N-acetyl-D-glucosamine. The N-linked (GlcNAc...) asparagine glycan is linked to N367.

Belongs to the glycosyltransferase 7 family. Requires Mn(2+) as cofactor. Mg(2+) serves as cofactor. It depends on Ca(2+) as a cofactor. As to expression, brain and kidney.

It is found in the golgi apparatus. The protein localises to the golgi stack membrane. The catalysed reaction is a beta-D-glucosyl-(1&lt;-&gt;1')-N-acylsphing-4-enine + UDP-alpha-D-galactose = a beta-D-Gal-(1-&gt;4)-beta-D-Glc-(1&lt;-&gt;1)-Cer(d18:1(4E)) + UDP + H(+). It functions in the pathway protein modification; protein glycosylation. Its pathway is sphingolipid metabolism. With respect to regulation, inhibited by EDTA. Functionally, catalyzes the synthesis of lactosylceramide (LacCer) via the transfer of galactose from UDP-galactose to glucosylceramide (GlcCer). LacCer is the starting point in the biosynthesis of all gangliosides (membrane-bound glycosphingolipids) which play pivotal roles in the CNS including neuronal maturation and axonal and myelin formation. The protein is Beta-1,4-galactosyltransferase 6 of Mus musculus (Mouse).